We begin with the raw amino-acid sequence, 229 residues long: Putative germin-like protein 12-4 (229 aa).

The signal sequence occupies residues 1-22; sequence MAASNFFLLTAFIALVATQAMA. Cys-32 and Cys-47 are oxidised to a cystine. The region spanning 62-217 is the Cupin type-1 domain; that stretch reads ANLDKPMDTT…AFQVDKKAMD (156 aa). Residue Asn-78 is glycosylated (N-linked (GlcNAc...) asparagine). The Mn(2+) site is built by His-111, His-113, Glu-118, and His-162.

The protein belongs to the germin family. In terms of assembly, oligomer (believed to be a pentamer but probably hexamer).

Its subcellular location is the secreted. It localises to the extracellular space. It is found in the apoplast. Its function is as follows. May play a role in plant defense. Probably has no oxalate oxidase activity even if the active site is conserved. The protein is Putative germin-like protein 12-4 of Oryza sativa subsp. japonica (Rice).